A 463-amino-acid polypeptide reads, in one-letter code: ATP-dependent protease ATPase subunit HslU (463 aa).

Residues V21, 63–68 (GVGKTE), D276, E341, and R413 contribute to the ATP site.

It belongs to the ClpX chaperone family. HslU subfamily. In terms of assembly, a double ring-shaped homohexamer of HslV is capped on each side by a ring-shaped HslU homohexamer. The assembly of the HslU/HslV complex is dependent on binding of ATP.

The protein localises to the cytoplasm. Functionally, ATPase subunit of a proteasome-like degradation complex; this subunit has chaperone activity. The binding of ATP and its subsequent hydrolysis by HslU are essential for unfolding of protein substrates subsequently hydrolyzed by HslV. HslU recognizes the N-terminal part of its protein substrates and unfolds these before they are guided to HslV for hydrolysis. The protein is ATP-dependent protease ATPase subunit HslU of Thermotoga sp. (strain RQ2).